The sequence spans 89 residues: MKVIPLGERLLIKPIKEEKRTEGGIVLPDTAKEKPMKAEVIEIGKDVEDIDIKVGDKVIFSKYAGTEIKIDDEDYILIDQDDILAKVEE.

This sequence belongs to the GroES chaperonin family. Heptamer of 7 subunits arranged in a ring. Interacts with the chaperonin GroEL.

It is found in the cytoplasm. Functionally, together with the chaperonin GroEL, plays an essential role in assisting protein folding. The GroEL-GroES system forms a nano-cage that allows encapsulation of the non-native substrate proteins and provides a physical environment optimized to promote and accelerate protein folding. GroES binds to the apical surface of the GroEL ring, thereby capping the opening of the GroEL channel. In Kosmotoga olearia (strain ATCC BAA-1733 / DSM 21960 / TBF 19.5.1), this protein is Co-chaperonin GroES.